Here is a 247-residue protein sequence, read N- to C-terminus: Aliphatic sulfonates import ATP-binding protein SsuB 3 (247 aa).

In terms of domain architecture, ABC transporter spans 28-242 (VSVRGLQRRY…ALRSILLEEL (215 aa)). 60 to 67 (GESGCGKT) contacts ATP.

It belongs to the ABC transporter superfamily. Aliphatic sulfonates importer (TC 3.A.1.17.2) family. As to quaternary structure, the complex is composed of two ATP-binding proteins (SsuB), two transmembrane proteins (SsuC) and a solute-binding protein (SsuA).

The protein resides in the cell inner membrane. It catalyses the reaction ATP + H2O + aliphatic sulfonate-[sulfonate-binding protein]Side 1 = ADP + phosphate + aliphatic sulfonateSide 2 + [sulfonate-binding protein]Side 1.. Its function is as follows. Part of the ABC transporter complex SsuABC involved in aliphatic sulfonates import. Responsible for energy coupling to the transport system. This chain is Aliphatic sulfonates import ATP-binding protein SsuB 3, found in Paraburkholderia xenovorans (strain LB400).